Here is a 151-residue protein sequence, read N- to C-terminus: ALK and LTK ligand 2 (151 aa).

Residues 1–25 form the signal peptide; it reads MRVSGRPMLLALLLLLSTVGDPGHA. 2 disulfide bridges follow: C112–C148 and C126–C135.

It belongs to the ALKAL family. As to quaternary structure, homodimer.

Its subcellular location is the secreted. The protein localises to the cell membrane. Functionally, cytokine that acts as a physiological ligand for receptor tyrosine kinases LTK and ALK, leading to their activation. Cytokine-binding is sufficient to activate LTK. In contrast, ALKAL2-driven activation of ALK is coupled with heparin-binding to ALK. Stimulation of ALK signaling is involved in neural development and regulation of energy expenditure. In Rattus norvegicus (Rat), this protein is ALK and LTK ligand 2.